The following is a 159-amino-acid chain: SsrA-binding protein (159 aa).

Positions 137–159 (KRQTEKERDWEREKQRLFQRDQR) are disordered.

It belongs to the SmpB family.

Its subcellular location is the cytoplasm. In terms of biological role, required for rescue of stalled ribosomes mediated by trans-translation. Binds to transfer-messenger RNA (tmRNA), required for stable association of tmRNA with ribosomes. tmRNA and SmpB together mimic tRNA shape, replacing the anticodon stem-loop with SmpB. tmRNA is encoded by the ssrA gene; the 2 termini fold to resemble tRNA(Ala) and it encodes a 'tag peptide', a short internal open reading frame. During trans-translation Ala-aminoacylated tmRNA acts like a tRNA, entering the A-site of stalled ribosomes, displacing the stalled mRNA. The ribosome then switches to translate the ORF on the tmRNA; the nascent peptide is terminated with the 'tag peptide' encoded by the tmRNA and targeted for degradation. The ribosome is freed to recommence translation, which seems to be the essential function of trans-translation. This chain is SsrA-binding protein, found in Cellvibrio japonicus (strain Ueda107) (Pseudomonas fluorescens subsp. cellulosa).